Reading from the N-terminus, the 178-residue chain is MLAAEGGHNPIIPEPVEIVVGLVAFLLLLFVLWKYAVPRFEKVYEERSKRIEGGIEKAEAAQAEAQRTLEQYRSQLAEARAEAARIRDDARAEGQQIVEEMRAQAQAESERIVSAGQSALAAQRAQIVAELRADLGRQAVDLAGRVVGESLEDEARRRGTVDRFLDELEAASAPASKA.

A helical membrane pass occupies residues isoleucine 11–valine 31.

The protein belongs to the ATPase B chain family. F-type ATPases have 2 components, F(1) - the catalytic core - and F(0) - the membrane proton channel. F(1) has five subunits: alpha(3), beta(3), gamma(1), delta(1), epsilon(1). F(0) has three main subunits: a(1), b(2) and c(10-14). The alpha and beta chains form an alternating ring which encloses part of the gamma chain. F(1) is attached to F(0) by a central stalk formed by the gamma and epsilon chains, while a peripheral stalk is formed by the delta and b chains.

The protein localises to the cell membrane. F(1)F(0) ATP synthase produces ATP from ADP in the presence of a proton or sodium gradient. F-type ATPases consist of two structural domains, F(1) containing the extramembraneous catalytic core and F(0) containing the membrane proton channel, linked together by a central stalk and a peripheral stalk. During catalysis, ATP synthesis in the catalytic domain of F(1) is coupled via a rotary mechanism of the central stalk subunits to proton translocation. Its function is as follows. Component of the F(0) channel, it forms part of the peripheral stalk, linking F(1) to F(0). In Saccharopolyspora erythraea (strain ATCC 11635 / DSM 40517 / JCM 4748 / NBRC 13426 / NCIMB 8594 / NRRL 2338), this protein is ATP synthase subunit b.